The sequence spans 890 residues: MQVEWSWFQQFQLEGVLLERWLLQLASAVVALLPIGLAIRWSRSLDPSPETASTVRLEGWRYSLTLLLAIALQLVSLAVINGLILQAIDDSMNLASGWQVSIHQSQLPVLTLISLVAVMQPRLRRLLPWFVSTAVVLIAARAWGVWALAWSIPLSGLQEPFLKADVSFALGRFAALQLLIALLSSGALFCLGNGLQTLLTRPPALSDWSCAVPGPRNRRLLMLMAALVLVLLAGQCWLSRHALLWHQHGIVAGAGWLQQAVTEPFRMLLTVELLLLALAVMLPSSLLLRRRLLGVLAVTLALGFSLTPLSRWLILRPQELSLQTPYLEEAIRSTRHAFQLDRITRGSYKPEPSLTKADIVQGASTLSNLRLWDSAPLLETNRQLQQLRVYYRFPQASVDRYPLSPQGDTPQQVILSARELDQSALPRRSKTWLNRHFVFTHGYGFTVSPVNTRGDDGLPEYFISDLGTDTRIQGNRELGIEREDVERAIPVEDAALYFGMLRSPYAVAPTRVDEFDYPEGDLNVYTHYRGSAGVPIGHWLQRVAAATYLGEPRLLTAGSIDHSSKLLIRREVRDRVQAIAPFLDLRGDPYLISIPQSGQPTSASNQHQYWVVEGFTHSSTYPYSSAVSNSDSDRYLRNSVKAVVDAYNGSVQLFISEPDDPLIRGWARVFPQLFQPLDAMPSSIRDHLRVPKELFDVQVKQLQRYHVEDPRVFYSGDDVWQVPLEVYDGEQISVRPYHITAQVQDRSNSEFLLLQPLTPLARPNLTAWLAARNDGKHYGDLVQIDFPKDTPILGPEQVQALINQDPEISKVFGLWDRGGSQVVQGNLLVVPVGQCLLYVEPVYLRASKGGLPSLTRIVVSDGRTIAMADTLPGAIDRLMQKTLPPVATGS.

8 consecutive transmembrane segments (helical) span residues 21 to 41, 64 to 84, 98 to 118, 134 to 154, 173 to 193, 219 to 239, 268 to 288, and 295 to 315; these read WLLQ…AIRW, LTLL…NGLI, WQVS…LVAV, AVVL…SIPL, FAAL…CLGN, RLLM…CWLS, LLTV…SLLL, and VLAV…WLIL.

This sequence belongs to the UPF0182 family.

It is found in the cell membrane. This is UPF0182 protein SYNW1212 from Parasynechococcus marenigrum (strain WH8102).